We begin with the raw amino-acid sequence, 443 residues long: UDP-N-acetylmuramate--L-alanine ligase (443 aa).

An ATP-binding site is contributed by 110 to 116; it reads GAHGKTS.

Belongs to the MurCDEF family.

It localises to the cytoplasm. It carries out the reaction UDP-N-acetyl-alpha-D-muramate + L-alanine + ATP = UDP-N-acetyl-alpha-D-muramoyl-L-alanine + ADP + phosphate + H(+). The protein operates within cell wall biogenesis; peptidoglycan biosynthesis. Its function is as follows. Cell wall formation. The chain is UDP-N-acetylmuramate--L-alanine ligase from Streptococcus equi subsp. zooepidemicus (strain MGCS10565).